Consider the following 379-residue polypeptide: Queuine tRNA-ribosyltransferase (379 aa).

Aspartate 94 serves as the catalytic Proton acceptor. Residues 94–98, aspartate 148, glutamine 191, and glycine 218 each bind substrate; that span reads DSGGF. Residues 249 to 255 are RNA binding; it reads GVGSPDS. Catalysis depends on aspartate 268, which acts as the Nucleophile. The tract at residues 273–277 is RNA binding; important for wobble base 34 recognition; that stretch reads TRIAR. Zn(2+) is bound by residues cysteine 306, cysteine 308, cysteine 311, and histidine 337.

This sequence belongs to the queuine tRNA-ribosyltransferase family. In terms of assembly, homodimer. Within each dimer, one monomer is responsible for RNA recognition and catalysis, while the other monomer binds to the replacement base PreQ1. Requires Zn(2+) as cofactor.

The enzyme catalyses 7-aminomethyl-7-carbaguanine + guanosine(34) in tRNA = 7-aminomethyl-7-carbaguanosine(34) in tRNA + guanine. Its pathway is tRNA modification; tRNA-queuosine biosynthesis. In terms of biological role, catalyzes the base-exchange of a guanine (G) residue with the queuine precursor 7-aminomethyl-7-deazaguanine (PreQ1) at position 34 (anticodon wobble position) in tRNAs with GU(N) anticodons (tRNA-Asp, -Asn, -His and -Tyr). Catalysis occurs through a double-displacement mechanism. The nucleophile active site attacks the C1' of nucleotide 34 to detach the guanine base from the RNA, forming a covalent enzyme-RNA intermediate. The proton acceptor active site deprotonates the incoming PreQ1, allowing a nucleophilic attack on the C1' of the ribose to form the product. After dissociation, two additional enzymatic reactions on the tRNA convert PreQ1 to queuine (Q), resulting in the hypermodified nucleoside queuosine (7-(((4,5-cis-dihydroxy-2-cyclopenten-1-yl)amino)methyl)-7-deazaguanosine). This chain is Queuine tRNA-ribosyltransferase, found in Listeria monocytogenes serotype 4a (strain HCC23).